The following is a 247-amino-acid chain: Protein lin-28 homolog B (247 aa).

The segment at 1-22 (MAEGGASKGEEPEKLPGLAEDE) is disordered. The 74-residue stretch at 27–100 (HGTGHCKWFN…GLESIRVTGP (74 aa)) folds into the CSD domain. 3 positions are modified to phosphoserine: Ser94, Ser103, and Ser108. The tract at residues 96 to 124 (RVTGPGGSPCLGSERRPKGKTLQKRKPKG) is disordered. Residues 112–123 (PKGKTLQKRKPK) are compositionally biased toward basic residues. CCHC-type zinc fingers lie at residues 125–142 (DRCY…ECSL) and 147–164 (KKCH…NCPH). Zn(2+) contacts are provided by Cys127, Cys130, His135, Cys140, Cys149, Cys152, His157, and Cys162. A compositionally biased stretch (polar residues) spans 173–186 (SSQGRQEAESQPCS). Residues 173–247 (SSQGRQEAES…GPLIQKRKKT (75 aa)) form a disordered region. The segment covering 207–219 (VKSEMAEHSDRSP) has biased composition (basic and acidic residues).

Belongs to the lin-28 family.

The protein localises to the nucleus. The protein resides in the nucleolus. Suppressor of microRNA (miRNA) biogenesis, including that of let-7 and possibly of miR107, miR-143 and miR-200c. Binds primary let-7 transcripts (pri-let-7), including pri-let-7g and pri-let-7a-1, and sequester them in the nucleolus, away from the microprocessor complex, hence preventing their processing into mature miRNA. Does not act on pri-miR21. The repression of let-7 expression is required for normal development and contributes to maintain the pluripotent state of embryonic stem cells by preventing let-7-mediated differentiation. When overexpressed, recruits ZCCHC11/TUT4 uridylyltransferase to pre-let-7 transcripts, leading to their terminal uridylation and degradation. This activity might not be relevant in vivo, as LIN28B-mediated inhibition of let-7 miRNA maturation appears to be ZCCHC11-independent. Interaction with target pre-miRNAs occurs via an 5'-GGAG-3' motif in the pre-miRNA terminal loop. Mediates MYC-induced let-7 repression. When overexpressed, may stimulate growth of carcinoma cell lines. The sequence is that of Protein lin-28 homolog B (Lin28b) from Mus musculus (Mouse).